Here is a 285-residue protein sequence, read N- to C-terminus: MNEKNKNDESKHQEDKLQDQKMWNRINKFFSRSIGQSAKRAPKPKAISKSQSFRILNRFNAMERNSIHMIVILSIISLLLILLLSPLMRFQKVEITGNHDLTKAEVLAASGINKKIPAWQLLSEQHYFIQRAEKNSQIKKVKISYLNMQVAQIKIEENSKVGLVTKKDKNYYILADGKFIPAQSVGEKPQRLPNYEKFPNDKTIKRVAMQFNGISKALQNSVSEVIWSPDHEDDEKVILIMDDGNKVLIKASDIKNKLKYYPGMVAQIDKNGTFNFQVGTYFQQY.

The segment covering methionine 1–aspartate 19 has biased composition (basic and acidic residues). The segment at methionine 1–glutamine 20 is disordered. At methionine 1 to serine 66 the chain is on the cytoplasmic side. A helical transmembrane segment spans residues isoleucine 67–leucine 87. The POTRA domain occupies methionine 88 to asparagine 158. Residues methionine 88–tyrosine 285 are Extracellular-facing.

Belongs to the FtsQ/DivIB family. DivIB subfamily.

It is found in the cell membrane. Functionally, cell division protein that may be involved in stabilizing or promoting the assembly of the division complex. The chain is Cell division protein DivIB from Weissella koreensis (strain KACC 15510).